Here is a 406-residue protein sequence, read N- to C-terminus: Acetate kinase (406 aa).

Asparagine 7 provides a ligand contact to Mg(2+). Lysine 14 serves as a coordination point for ATP. Arginine 90 is a binding site for substrate. Residue aspartate 147 is the Proton donor/acceptor of the active site. ATP-binding positions include histidine 207 to glycine 211, aspartate 283 to arginine 285, and glycine 331 to asparagine 335. Residue glutamate 385 coordinates Mg(2+).

It belongs to the acetokinase family. Homodimer. Mg(2+) serves as cofactor. Requires Mn(2+) as cofactor.

It localises to the cytoplasm. It carries out the reaction acetate + ATP = acetyl phosphate + ADP. The protein operates within metabolic intermediate biosynthesis; acetyl-CoA biosynthesis; acetyl-CoA from acetate: step 1/2. In terms of biological role, catalyzes the formation of acetyl phosphate from acetate and ATP. Can also catalyze the reverse reaction. The sequence is that of Acetate kinase from Fervidobacterium nodosum (strain ATCC 35602 / DSM 5306 / Rt17-B1).